Consider the following 645-residue polypeptide: MQLSWKDIPTVAPANDMLDIVLNRTQRKTPTVIRPGFKITRIRAFYMRKVKFTAEGFEEKFDDILKGFPNINDVHPFHRDLMDTLYEKNHYKISLAAVSRAKTLVEQVSRDYTRLLKFGQSLFQCKQLKRAALGRMATIVKKLKDPLVYLEQVRQHLGRLPSIDPNTRTLLICGYPNVGKSSFLRCITKSDVEVQPYAFTTKSLYVGHFDYKYLRFQAIDTPGILDRPTEEMNNIEMQSIYAIAHLRSCVMYFMDLSEQCGFSVEAQVKLFHSIKPLFANKSVMVVINKTDIIRPEDLDEERAKLLQTVTELPGVEIMSASCQLEDNVMNVRNKACEKLLASRIENKLKSQARITNVLNKIHVAKPQARDDVERTPYIPEEFKKLKKYDPEDPERRLLARDIEAENGGAGVFNINLKDKYILDDDEWKNDIMPEIMDGKNVYDFLDPDIAAKLQALEEEEERLEKEGFYDSDEDESYGGFDQEEIDEIREKADWIRNKQKKMIAEARNKKSLRNKAMMPRSKLVKSFGDMEKHMATLGHDMSSLQDKHRAAAEKSRYVETGADVVFGQNDSMASGSNGGKLRQSDRLLDGVADGSMRSKADRMAKLQRRQRNRDARQGEADRHATASLPKHLFSGKRGIGKSDFR.

The OBG-type G domain occupies 168 to 340; that stretch reads RTLLICGYPN…VRNKACEKLL (173 aa). GTP contacts are provided by residues 174–181, 220–224, and 288–291; these read GYPNVGKS, DTPGI, and NKTD. Residues 567–645 form a disordered region; sequence GQNDSMASGS…KRGIGKSDFR (79 aa). A compositionally biased stretch (basic and acidic residues) spans 612–624; the sequence is NRDARQGEADRHA.

The protein belongs to the TRAFAC class OBG-HflX-like GTPase superfamily. OBG GTPase family. NOG subfamily.

It is found in the nucleus. The protein resides in the nucleolus. In terms of biological role, involved in the biogenesis of the 60S ribosomal subunit. This Candida glabrata (strain ATCC 2001 / BCRC 20586 / JCM 3761 / NBRC 0622 / NRRL Y-65 / CBS 138) (Yeast) protein is Nucleolar GTP-binding protein 1 (NOG1).